Here is a 2166-residue protein sequence, read N- to C-terminus: Protein TIC236, chloroplastic (2166 aa).

A chloroplast-targeting transit peptide spans 1–37; sequence MSLRLQNPFLSTPLLHGSFNRREKRINVARRAFRSKR. Topologically, residues 38 to 101 are stromal; the sequence is IYSEKKQNDW…RSLAPVWEEG (64 aa). A helical membrane pass occupies residues 102-122; that stretch reads LFFLRCSVFFAVISGVCLLVW. Residues 123–2166 are Chloroplast intermembrane-facing; the sequence is YGQNKARVFV…LFEYSATSQD (2044 aa). The disordered stretch occupies residues 1611–1649; that stretch reads MSEGEVSETDRGGAVKIPSWAKEKEDDEKRTSRDRSEER. The segment covering 1631 to 1649 has biased composition (basic and acidic residues); that stretch reads AKEKEDDEKRTSRDRSEER.

Belongs to the TamB family. In terms of assembly, part of the TIC complex, which can interact with components of the TOC complex to form a larger import complex. Interacts with the TOC complex component TOC75-3.

The protein localises to the plastid. It localises to the chloroplast inner membrane. Its subcellular location is the chloroplast intermembrane space. Part of the inner chloroplast membrane translocon complex (TIC) which associates with the outer chloroplast membrane translocon complex (TOC) and forms a supercomplex involved in protein precursor import into the chloroplast stroma. Required for the import of HSP93, TIC40 and RBCS protein precursors in the chloroplast stroma. Links the outer and inner membrane translocons of the chloroplast envelope. The chain is Protein TIC236, chloroplastic from Arabidopsis thaliana (Mouse-ear cress).